The chain runs to 228 residues: Sugar fermentation stimulation protein homolog (228 aa).

The protein belongs to the SfsA family.

The polypeptide is Sugar fermentation stimulation protein homolog (Psychromonas ingrahamii (strain DSM 17664 / CCUG 51855 / 37)).